The following is a 196-amino-acid chain: DnaA initiator-associating protein DiaA (196 aa).

One can recognise an SIS domain in the interval 34-196; that stretch reads MVQSLLNGNK…DNTLFPHQND (163 aa).

Belongs to the SIS family. DiaA subfamily. As to quaternary structure, homotetramer; dimer of dimers.

Its function is as follows. Required for the timely initiation of chromosomal replication via direct interactions with the DnaA initiator protein. The polypeptide is DnaA initiator-associating protein DiaA (Pectobacterium atrosepticum (strain SCRI 1043 / ATCC BAA-672) (Erwinia carotovora subsp. atroseptica)).